We begin with the raw amino-acid sequence, 240 residues long: MTESHDTPITSDGEARPHRRIKSFVMRAGRMTEGQQRGLDQGGPLYILPLADSPVDYDQVFGRSAPRTLEIGFGMGHSLLEMAAAAPEQDFIGVEVHRPGVGALLNGVLTQGLKNLRVYDCDAIEVLNRCVADNSLDRLMLFFPDPWHKARHHKRRIVQLEFAELVRRKLKPGGVFHMATDWEPYAEYMLEVMSAAPGYRNRAADGTYVPRPEERPITKFERRGERLGHGVWDLKFEKVD.

The interval 1–20 (MTESHDTPITSDGEARPHRR) is disordered. S-adenosyl-L-methionine-binding residues include Glu-70, Glu-95, Asp-122, and Asp-145. Asp-145 is an active-site residue. Residues Lys-149, Asp-181, and 218–221 (TKFE) each bind substrate.

Belongs to the class I-like SAM-binding methyltransferase superfamily. TrmB family.

The enzyme catalyses guanosine(46) in tRNA + S-adenosyl-L-methionine = N(7)-methylguanosine(46) in tRNA + S-adenosyl-L-homocysteine. It functions in the pathway tRNA modification; N(7)-methylguanine-tRNA biosynthesis. In terms of biological role, catalyzes the formation of N(7)-methylguanine at position 46 (m7G46) in tRNA. The protein is tRNA (guanine-N(7)-)-methyltransferase of Pseudomonas putida (strain ATCC 700007 / DSM 6899 / JCM 31910 / BCRC 17059 / LMG 24140 / F1).